The chain runs to 467 residues: Chromosomal replication initiator protein DnaA (467 aa).

Residues 1–74 are domain I, interacts with DnaA modulators; it reads MSADVWSQGC…ESVLSDLAGK (74 aa). Residues 74 to 130 are domain II; it reads KPVRLDLQLAAREAPPRPSSDAPRSNGHPQAAGQWLGAPSSSNAGAYTQASAPTPTH. Residues 85–127 are disordered; sequence REAPPRPSSDAPRSNGHPQAAGQWLGAPSSSNAGAYTQASAPT. Over residues 112 to 127 the composition is skewed to polar residues; the sequence is PSSSNAGAYTQASAPT. Residues 131 to 347 form a domain III, AAA+ region region; sequence RLNTALTFDT…GALRKVLAYA (217 aa). ATP-binding residues include Gly-175, Gly-177, Lys-178, and Thr-179. The interval 348–467 is domain IV, binds dsDNA; that stretch reads RFSQKDINIA…LHVLEQTLKG (120 aa).

This sequence belongs to the DnaA family. Oligomerizes as a right-handed, spiral filament on DNA at oriC.

The protein localises to the cytoplasm. In terms of biological role, plays an essential role in the initiation and regulation of chromosomal replication. ATP-DnaA binds to the origin of replication (oriC) to initiate formation of the DNA replication initiation complex once per cell cycle. Binds the DnaA box (a 9 base pair repeat at the origin) and separates the double-stranded (ds)DNA. Forms a right-handed helical filament on oriC DNA; dsDNA binds to the exterior of the filament while single-stranded (ss)DNA is stabiized in the filament's interior. The ATP-DnaA-oriC complex binds and stabilizes one strand of the AT-rich DNA unwinding element (DUE), permitting loading of DNA polymerase. After initiation quickly degrades to an ADP-DnaA complex that is not apt for DNA replication. Binds acidic phospholipids. The protein is Chromosomal replication initiator protein DnaA of Methylibium petroleiphilum (strain ATCC BAA-1232 / LMG 22953 / PM1).